The following is a 743-amino-acid chain: Putative metallophosphoesterase At3g03305 (743 aa).

Positions methionine 1–glycine 40 are cleaved as a signal peptide. Residues aspartate 66, histidine 68, and aspartate 101 each coordinate a divalent metal cation. Transmembrane regions (helical) follow at residues isoleucine 514–isoleucine 534, methionine 565–phenylalanine 585, valine 623–cysteine 643, leucine 687–phenylalanine 704, and methionine 716–isoleucine 736.

Belongs to the metallophosphoesterase superfamily. Requires a divalent metal cation as cofactor.

Its subcellular location is the membrane. The sequence is that of Putative metallophosphoesterase At3g03305 from Arabidopsis thaliana (Mouse-ear cress).